A 171-amino-acid chain; its full sequence is Protein-export protein SecB (171 aa).

The protein belongs to the SecB family. In terms of assembly, homotetramer, a dimer of dimers. One homotetramer interacts with 1 SecA dimer.

The protein localises to the cytoplasm. Its function is as follows. One of the proteins required for the normal export of preproteins out of the cell cytoplasm. It is a molecular chaperone that binds to a subset of precursor proteins, maintaining them in a translocation-competent state. It also specifically binds to its receptor SecA. In Jannaschia sp. (strain CCS1), this protein is Protein-export protein SecB.